The primary structure comprises 164 residues: Phosphopantetheine adenylyltransferase (164 aa).

T10 contacts substrate. ATP-binding positions include 10–11 (TF) and H18. K42, T79, and R93 together coordinate substrate. ATP is bound by residues 94–96 (GLR), E104, and 129–135 (NQIISSR).

Belongs to the bacterial CoaD family. As to quaternary structure, homohexamer. Requires Mg(2+) as cofactor.

Its subcellular location is the cytoplasm. The catalysed reaction is (R)-4'-phosphopantetheine + ATP + H(+) = 3'-dephospho-CoA + diphosphate. Its pathway is cofactor biosynthesis; coenzyme A biosynthesis; CoA from (R)-pantothenate: step 4/5. Reversibly transfers an adenylyl group from ATP to 4'-phosphopantetheine, yielding dephospho-CoA (dPCoA) and pyrophosphate. The chain is Phosphopantetheine adenylyltransferase from Pelagibacter ubique (strain HTCC1062).